The sequence spans 291 residues: ATP synthase gamma chain 2 (291 aa).

Residues 187-208 (LLPHPDKDESQDSKPNDATSRW) form a disordered region. The span at 190-201 (HPDKDESQDSKP) shows a compositional bias: basic and acidic residues.

This sequence belongs to the ATPase gamma chain family. As to quaternary structure, F-type ATPases have 2 components, CF(1) - the catalytic core - and CF(0) - the membrane proton channel. CF(1) has five subunits: alpha(3), beta(3), gamma(1), delta(1), epsilon(1). CF(0) has three main subunits: a, b and c.

Its subcellular location is the cell inner membrane. Functionally, produces ATP from ADP in the presence of a proton gradient across the membrane. The gamma chain is believed to be important in regulating ATPase activity and the flow of protons through the CF(0) complex. In Photobacterium profundum (strain SS9), this protein is ATP synthase gamma chain 2.